Consider the following 609-residue polypeptide: NADH-ubiquinone oxidoreductase chain 5 (609 aa).

The next 16 helical transmembrane spans lie at 3-23, 46-66, 90-110, 115-135, 140-160, 174-194, 216-236, 244-264, 276-296, 304-323, 328-350, 368-388, 410-432, 460-480, 485-505, and 585-605; these read VINL…LPIV, AFMI…EMII, MIFV…SMWY, PFIN…MILV, LFQL…LIGW, AVLY…WFLI, LMGL…HPWL, TPVS…FLLI, MQTT…ICAL, IIAF…IGIN, AFLH…GSII, VLPF…GMPF, WALL…IMFF, LLLG…PTST, MPYY…ILAL, and GLIK…LMMI.

This sequence belongs to the complex I subunit 5 family.

The protein localises to the mitochondrion inner membrane. The enzyme catalyses a ubiquinone + NADH + 5 H(+)(in) = a ubiquinol + NAD(+) + 4 H(+)(out). In terms of biological role, core subunit of the mitochondrial membrane respiratory chain NADH dehydrogenase (Complex I) that is believed to belong to the minimal assembly required for catalysis. Complex I functions in the transfer of electrons from NADH to the respiratory chain. The immediate electron acceptor for the enzyme is believed to be ubiquinone. This chain is NADH-ubiquinone oxidoreductase chain 5 (MT-ND5), found in Phoca vitulina (Harbor seal).